An 815-amino-acid polypeptide reads, in one-letter code: Echinoderm microtubule-associated protein-like 1 (815 aa).

Residues serine 31–glutamine 72 adopt a coiled-coil conformation. The tract at residues asparagine 77–valine 179 is disordered. The segment covering proline 92–threonine 101 has biased composition (polar residues). Serine 113 carries the post-translational modification Phosphoserine. Over residues threonine 126–arginine 138 the composition is skewed to polar residues. Positions glycine 143–glycine 153 are enriched in basic and acidic residues. Positions asparagine 156 to lysine 168 are enriched in low complexity. Positions lysine 176 to isoleucine 815 are tandem atypical propeller in EMLs. 12 WD repeats span residues glutamate 261–serine 310, threonine 315–tryptophan 358, lysine 363–leucine 400, glutamine 409–lysine 446, arginine 450–glycine 489, lysine 493–threonine 530, phenylalanine 535–alanine 572, valine 578–threonine 613, aspartate 617–valine 655, arginine 664–proline 701, serine 709–tyrosine 768, and alanine 775–valine 814.

The protein belongs to the WD repeat EMAP family. Homotrimer; self-association is mediated by the N-terminal coiled coil. Does not interact with EML3. Binds repolymerizing microtubules. Binds unpolymerized tubulins via its WD repeat region. Interacts with TASOR. As to expression, ubiquitous; expressed in most tissues with the exception of thymus and peripheral blood lymphocytes.

The protein localises to the cytoplasm. The protein resides in the perinuclear region. It is found in the cytoskeleton. In terms of biological role, modulates the assembly and organization of the microtubule cytoskeleton, and probably plays a role in regulating the orientation of the mitotic spindle and the orientation of the plane of cell division. Required for normal proliferation of neuronal progenitor cells in the developing brain and for normal brain development. Does not affect neuron migration per se. The protein is Echinoderm microtubule-associated protein-like 1 (EML1) of Homo sapiens (Human).